A 209-amino-acid chain; its full sequence is tRNA (guanine-N(7)-)-methyltransferase (209 aa).

Residues aspartate 35, glutamate 60, asparagine 87, and aspartate 113 each coordinate S-adenosyl-L-methionine. The active site involves aspartate 113. Positions 117 and 149 each coordinate substrate.

It belongs to the class I-like SAM-binding methyltransferase superfamily. TrmB family.

The catalysed reaction is guanosine(46) in tRNA + S-adenosyl-L-methionine = N(7)-methylguanosine(46) in tRNA + S-adenosyl-L-homocysteine. The protein operates within tRNA modification; N(7)-methylguanine-tRNA biosynthesis. Its function is as follows. Catalyzes the formation of N(7)-methylguanine at position 46 (m7G46) in tRNA. This Prochlorococcus marinus (strain MIT 9215) protein is tRNA (guanine-N(7)-)-methyltransferase.